The following is a 209-amino-acid chain: Streptogramin A acetyltransferase (209 aa).

Residue His82 is part of the active site.

The protein belongs to the transferase hexapeptide repeat family. As to quaternary structure, homohexamer.

Its function is as follows. Inactivates the A compounds of streptogramin antibiotics by acetylation, thus providing resistance to these antibiotics. This is Streptogramin A acetyltransferase (vatD) from Enterococcus faecium (Streptococcus faecium).